Reading from the N-terminus, the 207-residue chain is Thymidylate kinase (207 aa).

Residue 7 to 14 participates in ATP binding; sequence GCEGTGKT.

It belongs to the thymidylate kinase family.

It carries out the reaction dTMP + ATP = dTDP + ADP. Phosphorylation of dTMP to form dTDP in both de novo and salvage pathways of dTTP synthesis. The sequence is that of Thymidylate kinase from Onion yellows phytoplasma (strain OY-M).